The primary structure comprises 189 residues: Large ribosomal subunit protein bL9 (189 aa).

The protein belongs to the bacterial ribosomal protein bL9 family.

In terms of biological role, binds to the 23S rRNA. The sequence is that of Large ribosomal subunit protein bL9 from Beijerinckia indica subsp. indica (strain ATCC 9039 / DSM 1715 / NCIMB 8712).